A 270-amino-acid polypeptide reads, in one-letter code: Non-homologous end joining protein Ku (270 aa).

The 185-residue stretch at 10–194 folds into the Ku domain; it reads SLGLLNIGIK…NYPIQKQELT (185 aa).

It belongs to the prokaryotic Ku family. As to quaternary structure, homodimer. Interacts with LigD.

With LigD forms a non-homologous end joining (NHEJ) DNA repair enzyme, which repairs dsDNA breaks with reduced fidelity. Binds linear dsDNA with 5'- and 3'- overhangs but not closed circular dsDNA nor ssDNA. Recruits and stimulates the ligase activity of LigD. This is Non-homologous end joining protein Ku from Bacillus thuringiensis subsp. konkukian (strain 97-27).